The following is a 201-amino-acid chain: dITP/XTP pyrophosphatase (201 aa).

Residue threonine 9–lysine 14 participates in substrate binding. Mg(2+) contacts are provided by glutamate 42 and aspartate 71. Catalysis depends on aspartate 71, which acts as the Proton acceptor. Residues serine 72, phenylalanine 156–aspartate 159, lysine 178, and histidine 183–arginine 184 each bind substrate.

The protein belongs to the HAM1 NTPase family. As to quaternary structure, homodimer. Requires Mg(2+) as cofactor.

The enzyme catalyses XTP + H2O = XMP + diphosphate + H(+). It catalyses the reaction dITP + H2O = dIMP + diphosphate + H(+). It carries out the reaction ITP + H2O = IMP + diphosphate + H(+). Functionally, pyrophosphatase that catalyzes the hydrolysis of nucleoside triphosphates to their monophosphate derivatives, with a high preference for the non-canonical purine nucleotides XTP (xanthosine triphosphate), dITP (deoxyinosine triphosphate) and ITP. Seems to function as a house-cleaning enzyme that removes non-canonical purine nucleotides from the nucleotide pool, thus preventing their incorporation into DNA/RNA and avoiding chromosomal lesions. The chain is dITP/XTP pyrophosphatase (ynbD) from Lactococcus lactis subsp. lactis (strain IL1403) (Streptococcus lactis).